Consider the following 644-residue polypeptide: 1-deoxy-D-xylulose-5-phosphate synthase (644 aa).

Thiamine diphosphate-binding positions include His78 and 120-122; that span reads GHA. Position 149 (Asp149) interacts with Mg(2+). Thiamine diphosphate contacts are provided by residues 150–151, Asn178, and Glu373; that span reads AA. Residue Asn178 coordinates Mg(2+).

This sequence belongs to the transketolase family. DXPS subfamily. In terms of assembly, homodimer. It depends on Mg(2+) as a cofactor. The cofactor is thiamine diphosphate.

The catalysed reaction is D-glyceraldehyde 3-phosphate + pyruvate + H(+) = 1-deoxy-D-xylulose 5-phosphate + CO2. It functions in the pathway metabolic intermediate biosynthesis; 1-deoxy-D-xylulose 5-phosphate biosynthesis; 1-deoxy-D-xylulose 5-phosphate from D-glyceraldehyde 3-phosphate and pyruvate: step 1/1. Its function is as follows. Catalyzes the acyloin condensation reaction between C atoms 2 and 3 of pyruvate and glyceraldehyde 3-phosphate to yield 1-deoxy-D-xylulose-5-phosphate (DXP). In Chlamydia caviae (strain ATCC VR-813 / DSM 19441 / 03DC25 / GPIC) (Chlamydophila caviae), this protein is 1-deoxy-D-xylulose-5-phosphate synthase.